A 997-amino-acid chain; its full sequence is Mannuronan C5-epimerase AlgE2 (997 aa).

PbH1 repeat units lie at residues 133–155 (DRDVTLERVEIREMSGYGFDPHE), 157–179 (TINLTIRDSVAHDNGLDGFVADF), 180–202 (QIGGVFENNVSYNNDRHGFNIVT), 204–226 (TNDFVLSNNVAYGNGGAGLVVQR), 257–279 (AHDVTLQNAEIYGNGLYGVRVYG), 280–315 (AEDVQILDNYIHDNSQNGSYAEILLQSYDDTAGVSG), and 320–359 (TTGTWIEGNTIVGSANSTYGIQERDDGTDYSSLYANSVSN). Hemolysin-type calcium-binding repeat units lie at residues 388–403 (GTAGNDTLGGSDAHET), 406–422 (GLDGNDRLNGGAGNDIL), 424–439 (GGAGRDNLTGGAGADL), 557–573 (GHAGNDTLDGGAGDDIL), 574–591 (VGGAGRDSLTGGAGADVF), 696–711 (GSAGNDSLQGTAADEV), 713–730 (HGGGGRDTLAGGAGADVF), 828–839 (GGDGNDTLSGSS), 846–862 (GGVGNDSLDGGAGNDIL), and 864–880 (GGAGRDTLSGGSGSDIF).

Belongs to the D-mannuronate C5-epimerase family. Ca(2+) is required as a cofactor.

It localises to the secreted. The enzyme catalyses [(1-&gt;4)-beta-D-mannuronosyl](n) = [alginate](n). The protein operates within glycan biosynthesis; alginate biosynthesis. Inhibited by zinc. Converts beta-D-mannuronic acid (M) to alpha-L-guluronic acid (G), producing a polymer with gel-forming capacity, required for the formation of the cyst coat. This chain is Mannuronan C5-epimerase AlgE2, found in Azotobacter vinelandii.